The primary structure comprises 571 residues: Chitin-inducible gibberellin-responsive protein 1 (571 aa).

Residues 61-77 (TNTPDNQSSTETISAQP) show a composition bias toward polar residues. Disordered regions lie at residues 61-80 (TNTPDNQSSTETISAQPISP) and 151-180 (QRSRTWSHESRQPLPGVGRSQFASGGYPTA). One can recognise a GRAS domain in the interval 192 to 571 (ELREDPQIIV…RKLISASAWH (380 aa)). The leucine repeat I (LRI) stretch occupies residues 199–259 (IIVKQLLTRC…VARHGNSGTN (61 aa)). Positions 278–343 (MRILYNICPY…GGPPRVRITG (66 aa)) are VHIID. The VHIID signature appears at 309 to 313 (IHIID). A leucine repeat II (LRII) region spans residues 359 to 391 (IVGKMLKSMSEEFKIPLEFTPLSVYATQVTKEM). The interval 400–494 (LSVNFTLQLH…QHCLAKDIVN (95 aa)) is PFYRE. Residues 497 to 571 (ACEGKDRVER…RKLISASAWH (75 aa)) are SAW.

The protein belongs to the GRAS family.

The protein resides in the nucleus. Functionally, may play a regulatory role in the early step of oligosaccharide elicitor response, downstream of the membrane-associated high-affinity chitin-binding protein. This is Chitin-inducible gibberellin-responsive protein 1 (CIGR1) from Oryza sativa subsp. japonica (Rice).